The following is a 207-amino-acid chain: ATP-dependent Clp protease proteolytic subunit (207 aa).

The active-site Nucleophile is Ser-111. His-136 is a catalytic residue.

The protein belongs to the peptidase S14 family. As to quaternary structure, fourteen ClpP subunits assemble into 2 heptameric rings which stack back to back to give a disk-like structure with a central cavity, resembling the structure of eukaryotic proteasomes.

Its subcellular location is the cytoplasm. The enzyme catalyses Hydrolysis of proteins to small peptides in the presence of ATP and magnesium. alpha-casein is the usual test substrate. In the absence of ATP, only oligopeptides shorter than five residues are hydrolyzed (such as succinyl-Leu-Tyr-|-NHMec, and Leu-Tyr-Leu-|-Tyr-Trp, in which cleavage of the -Tyr-|-Leu- and -Tyr-|-Trp bonds also occurs).. Cleaves peptides in various proteins in a process that requires ATP hydrolysis. Has a chymotrypsin-like activity. Plays a major role in the degradation of misfolded proteins. In Yersinia enterocolitica serotype O:8 / biotype 1B (strain NCTC 13174 / 8081), this protein is ATP-dependent Clp protease proteolytic subunit.